Reading from the N-terminus, the 391-residue chain is Mannonate dehydratase (391 aa).

The protein belongs to the mannonate dehydratase family. The cofactor is Fe(2+). Requires Mn(2+) as cofactor.

It carries out the reaction D-mannonate = 2-dehydro-3-deoxy-D-gluconate + H2O. The protein operates within carbohydrate metabolism; pentose and glucuronate interconversion. Its function is as follows. Catalyzes the dehydration of D-mannonate. The sequence is that of Mannonate dehydratase from Marinomonas sp. (strain MWYL1).